The primary structure comprises 221 residues: Endonuclease segA (221 aa).

The GIY-YIG domain occupies 8–91 (KYNYTYVITN…VVNDPMTYNL (84 aa)). The segment at 137–164 (KKQSEETKAKRKEALLNNPYGYNRNKPS) is disordered. The span at 138–150 (KQSEETKAKRKEA) shows a compositional bias: basic and acidic residues.

It to endonucleases of group I introns of fungi and phage. The cofactor is Mg(2+).

Its function is as follows. Probably involved in the movement of the endonuclease-encoding DNA. The sequence is that of Endonuclease segA (segA) from Escherichia coli (Bacteriophage T4).